The following is a 203-amino-acid chain: Nucleoside triphosphate pyrophosphatase (203 aa).

Asp80 (proton acceptor) is an active-site residue.

Belongs to the Maf family. The cofactor is a divalent metal cation.

The protein localises to the cytoplasm. It catalyses the reaction a ribonucleoside 5'-triphosphate + H2O = a ribonucleoside 5'-phosphate + diphosphate + H(+). The enzyme catalyses a 2'-deoxyribonucleoside 5'-triphosphate + H2O = a 2'-deoxyribonucleoside 5'-phosphate + diphosphate + H(+). In terms of biological role, nucleoside triphosphate pyrophosphatase. May have a dual role in cell division arrest and in preventing the incorporation of modified nucleotides into cellular nucleic acids. The sequence is that of Nucleoside triphosphate pyrophosphatase from Gluconobacter oxydans (strain 621H) (Gluconobacter suboxydans).